A 66-amino-acid polypeptide reads, in one-letter code: Phylloseptin-S4 (66 aa).

An N-terminal signal peptide occupies residues 1–22; that stretch reads MAFLKKSLFLVLFLGLVSLSIC. Residues 23 to 46 constitute a propeptide that is removed on maturation; the sequence is EEEKRETEEEEHDQEEDDKSEEKR. The tract at residues 25-44 is disordered; it reads EKRETEEEEHDQEEDDKSEE. The segment covering 30-41 has biased composition (acidic residues); that stretch reads EEEEHDQEEDDK. Leucine amide is present on Leu65.

Expressed by the skin glands.

Its subcellular location is the secreted. The protein resides in the target cell membrane. Functionally, antimicrobial peptide with high activity against Gram-positive bacteria, moderate activity against Gram-negative bacteria, and moderate activity against fungi. Acts by causing bacterial membrane disruption inducing leakage of the intracellular content followed by cell death. It adopts an alpha-helical amphipathic structure in membrane environments. Also shows highly potent antiparasitic activity against Leishmania species. Shows moderate hemolytic activity on human erythrocytes (LC(50)=33 uM). Is also active on human monocytes (IC(50)=23 uM). This is Phylloseptin-S4 from Phyllomedusa sauvagei (Sauvage's leaf frog).